A 177-amino-acid polypeptide reads, in one-letter code: ATP synthase subunit delta (177 aa).

This sequence belongs to the ATPase delta chain family. As to quaternary structure, F-type ATPases have 2 components, F(1) - the catalytic core - and F(0) - the membrane proton channel. F(1) has five subunits: alpha(3), beta(3), gamma(1), delta(1), epsilon(1). F(0) has three main subunits: a(1), b(2) and c(10-14). The alpha and beta chains form an alternating ring which encloses part of the gamma chain. F(1) is attached to F(0) by a central stalk formed by the gamma and epsilon chains, while a peripheral stalk is formed by the delta and b chains.

It is found in the cell inner membrane. Its function is as follows. F(1)F(0) ATP synthase produces ATP from ADP in the presence of a proton or sodium gradient. F-type ATPases consist of two structural domains, F(1) containing the extramembraneous catalytic core and F(0) containing the membrane proton channel, linked together by a central stalk and a peripheral stalk. During catalysis, ATP synthesis in the catalytic domain of F(1) is coupled via a rotary mechanism of the central stalk subunits to proton translocation. In terms of biological role, this protein is part of the stalk that links CF(0) to CF(1). It either transmits conformational changes from CF(0) to CF(1) or is implicated in proton conduction. The protein is ATP synthase subunit delta of Aliivibrio fischeri (strain MJ11) (Vibrio fischeri).